The sequence spans 483 residues: UDP-N-acetylmuramyl-tripeptide synthetase (483 aa).

S43 serves as a coordination point for UDP-N-acetyl-alpha-D-muramoyl-L-alanyl-D-glutamate. 116 to 122 provides a ligand contact to ATP; it reads GTKGKTT. UDP-N-acetyl-alpha-D-muramoyl-L-alanyl-D-glutamate is bound by residues 160 to 161, S187, and R195; that span reads TT. The residue at position 229 (K229) is an N6-carboxylysine.

It belongs to the MurCDEF family. MurE subfamily. Carboxylation is probably crucial for Mg(2+) binding and, consequently, for the gamma-phosphate positioning of ATP.

Its subcellular location is the cytoplasm. It participates in cell wall biogenesis; peptidoglycan biosynthesis. Its function is as follows. Catalyzes the addition of an amino acid to the nucleotide precursor UDP-N-acetylmuramoyl-L-alanyl-D-glutamate (UMAG) in the biosynthesis of bacterial cell-wall peptidoglycan. The sequence is that of UDP-N-acetylmuramyl-tripeptide synthetase from Lactococcus lactis subsp. cremoris (strain SK11).